The sequence spans 243 residues: UPF0280 protein Memar_1519 (243 aa).

It belongs to the UPF0280 family.

The polypeptide is UPF0280 protein Memar_1519 (Methanoculleus marisnigri (strain ATCC 35101 / DSM 1498 / JR1)).